The sequence spans 140 residues: ATP synthase epsilon chain (140 aa).

It belongs to the ATPase epsilon chain family. F-type ATPases have 2 components, CF(1) - the catalytic core - and CF(0) - the membrane proton channel. CF(1) has five subunits: alpha(3), beta(3), gamma(1), delta(1), epsilon(1). CF(0) has three main subunits: a, b and c.

Its subcellular location is the cell inner membrane. In terms of biological role, produces ATP from ADP in the presence of a proton gradient across the membrane. This is ATP synthase epsilon chain from Legionella pneumophila (strain Lens).